The sequence spans 134 residues: TSC22 domain family protein 3 (134 aa).

Met-1 bears the N-acetylmethionine mark. The segment at 1–60 is AP1-binding; that stretch reads MNTEMYQTPMEVAVYQLHNFSISFFSSLLGGDVVSVKLDNSASGASVVAIDNKIEQAMDL. 2 positions are modified to phosphoserine: Ala-42 and Val-73. The leucine-zipper stretch occupies residues 76–97; it reads LKEQIRELVEKNSQLERENTLL. At Ser-102 the chain carries Phosphoserine. The disordered stretch occupies residues 108-134; sequence KFQSCLSPEEPAPESPQVPEAPGGSAV.

This sequence belongs to the TSC-22/Dip/Bun family. In terms of assembly, can form homodimers, however it is likely to function as a monomer. Interacts with NFKB1. Interacts (via N-terminus) with JUN and FOS; these interactions inhibit the binding of active AP1 to its target DNA. Interacts with MYOD1. Interacts with HDAC1; this interaction affects HDAC1 activity on MYOG promoter and thus inhibits MYOD1 transcriptional activity. In terms of tissue distribution, ubiquitously expressed, including in the fetal brain and liver. Expressed in brain, lung, spleen and skeletal muscle. Lower levels detected in heart and kidney. Not detected in the pancreas. In non-lymphoid tissues, in the absence of inflammation, the major source of constitutive expression is the macrophage lineage. Also expressed in cells from different hemopoietic cell lineages, including bone marrow cells, CD34+ stem cells, mature B- and T-cells, monocytes and granulocytes. Down-regulated in activated macrophages from inflammatory lesions of delayed-type hypersensitivity (DTH) reactions, such as in tuberculosis and in Crohn disease, whereas in Burkitt lymphoma, persists in macrophages involved in the phagocytosis of apoptotic malignant cells.

The protein resides in the cytoplasm. The protein localises to the nucleus. Functionally, protects T-cells from IL2 deprivation-induced apoptosis through the inhibition of FOXO3A transcriptional activity that leads to the down-regulation of the pro-apoptotic factor BCL2L11. In macrophages, plays a role in the anti-inflammatory and immunosuppressive effects of glucocorticoids and IL10. In T-cells, inhibits anti-CD3-induced NFKB1 nuclear translocation and thereby NFKB1 DNA-binding activities. In vitro, suppresses AP-1 transcription factor complex DNA-binding activities. Its function is as follows. Inhibits myogenic differentiation and mediates anti-myogenic effects of glucocorticoids by binding and regulating MYOD1 and HDAC1 transcriptional activity resulting in reduced expression of MYOG. The sequence is that of TSC22 domain family protein 3 from Homo sapiens (Human).